The primary structure comprises 344 residues: MITLAVDCMGGDHGPRVTLAACRQFLEHHPQARLLLVGQPESLGGFAHERAQIVPASEVVSMDDPVEVALRRKKDSSMRVAVQQVKDGAAQVAVSAGNTGALMAIARYLLKTLDGIDRPAIATQMPNARGGATTVLDLGANVDCSAEHLLQFAVMGAALVSALHEGTEEPAVGLLNIGEEVIKGNEVIKRTGELLRSAAESGDLNFYGNVEGNDIFKGTVDIVVCDGFVGNVALKASEGVASMIVGALKQEFKRSIFTKIAAVVAYPVLSALMRRMDHRRYNGAALLGLRGLVFKSHGSADILAFEQALIRAYDTARNNLLDRVRSRVAHAAPLLGPAAAQPSP.

Belongs to the PlsX family. Homodimer. Probably interacts with PlsY.

It localises to the cytoplasm. The catalysed reaction is a fatty acyl-[ACP] + phosphate = an acyl phosphate + holo-[ACP]. It participates in lipid metabolism; phospholipid metabolism. In terms of biological role, catalyzes the reversible formation of acyl-phosphate (acyl-PO(4)) from acyl-[acyl-carrier-protein] (acyl-ACP). This enzyme utilizes acyl-ACP as fatty acyl donor, but not acyl-CoA. The sequence is that of Phosphate acyltransferase from Paracidovorax citrulli (strain AAC00-1) (Acidovorax citrulli).